We begin with the raw amino-acid sequence, 313 residues long: tRNA dimethylallyltransferase (313 aa).

Gly-9–Ser-16 lines the ATP pocket. Position 11 to 16 (Thr-11 to Ser-16) interacts with substrate.

The protein belongs to the IPP transferase family. In terms of assembly, monomer. Mg(2+) serves as cofactor.

It catalyses the reaction adenosine(37) in tRNA + dimethylallyl diphosphate = N(6)-dimethylallyladenosine(37) in tRNA + diphosphate. In terms of biological role, catalyzes the transfer of a dimethylallyl group onto the adenine at position 37 in tRNAs that read codons beginning with uridine, leading to the formation of N6-(dimethylallyl)adenosine (i(6)A). This is tRNA dimethylallyltransferase from Mycobacteroides abscessus (strain ATCC 19977 / DSM 44196 / CCUG 20993 / CIP 104536 / JCM 13569 / NCTC 13031 / TMC 1543 / L948) (Mycobacterium abscessus).